Here is a 267-residue protein sequence, read N- to C-terminus: Glutamate racemase (267 aa).

Residues 13-14 (DS) and 45-46 (YG) each bind substrate. Cys77 functions as the Proton donor/acceptor in the catalytic mechanism. 78–79 (NT) is a substrate binding site. Cys192 (proton donor/acceptor) is an active-site residue. 193-194 (TH) serves as a coordination point for substrate.

This sequence belongs to the aspartate/glutamate racemases family.

The enzyme catalyses L-glutamate = D-glutamate. It participates in cell wall biogenesis; peptidoglycan biosynthesis. Its function is as follows. Provides the (R)-glutamate required for cell wall biosynthesis. The protein is Glutamate racemase of Sinorhizobium fredii (strain NBRC 101917 / NGR234).